The following is a 202-amino-acid chain: Small ribosomal subunit protein uS4c (202 aa).

The S4 RNA-binding domain occupies Met-90 to Gly-148.

It belongs to the universal ribosomal protein uS4 family. Part of the 30S ribosomal subunit. Contacts protein S5. The interaction surface between S4 and S5 is involved in control of translational fidelity.

It is found in the plastid. Its subcellular location is the chloroplast. In terms of biological role, one of the primary rRNA binding proteins, it binds directly to 16S rRNA where it nucleates assembly of the body of the 30S subunit. With S5 and S12 plays an important role in translational accuracy. The polypeptide is Small ribosomal subunit protein uS4c (rps4) (Haplomitrium hookeri (Hooker's flapwort)).